The chain runs to 62 residues: Cytochrome b-c1 complex subunit 6-2, mitochondrial (62 aa).

2 disulfide bridges follow: Cys17/Cys59 and Cys31/Cys45.

Belongs to the UQCRH/QCR6 family. Component of the ubiquinol-cytochrome c oxidoreductase (cytochrome b-c1 complex, complex III, CIII), a multisubunit enzyme composed of 10 subunits. The complex is composed of 3 respiratory subunits cytochrome b (MT-CYB), cytochrome c1 (CYC1-1 or CYC1-2) and Rieske protein (UCR1-1 or UCR1-2), 2 core protein subunits MPPalpha1 (or MPPalpha2) and MPPB, and 5 low-molecular weight protein subunits QCR7-1 (or QCR7-2), UCRQ-1 (or UCRQ-2), QCR9, UCRY and probably QCR6-1 (or QCR6-2). The complex exists as an obligatory dimer and forms supercomplexes (SCs) in the inner mitochondrial membrane with NADH-ubiquinone oxidoreductase (complex I, CI), resulting in different assemblies (supercomplexes SCI(1)III(2) and SCI(2)III(4)).

Its subcellular location is the mitochondrion inner membrane. In terms of biological role, component of the ubiquinol-cytochrome c oxidoreductase, a multisubunit transmembrane complex that is part of the mitochondrial electron transport chain which drives oxidative phosphorylation. The respiratory chain contains 3 multisubunit complexes succinate dehydrogenase (complex II, CII), ubiquinol-cytochrome c oxidoreductase (cytochrome b-c1 complex, complex III, CIII) and cytochrome c oxidase (complex IV, CIV), that cooperate to transfer electrons derived from NADH and succinate to molecular oxygen, creating an electrochemical gradient over the inner membrane that drives transmembrane transport and the ATP synthase. The cytochrome b-c1 complex catalyzes electron transfer from ubiquinol to cytochrome c, linking this redox reaction to translocation of protons across the mitochondrial inner membrane, with protons being carried across the membrane as hydrogens on the quinol. In the process called Q cycle, 2 protons are consumed from the matrix, 4 protons are released into the intermembrane space and 2 electrons are passed to cytochrome c. The protein is Cytochrome b-c1 complex subunit 6-2, mitochondrial (QCR6-2) of Arabidopsis thaliana (Mouse-ear cress).